A 227-amino-acid polypeptide reads, in one-letter code: 7-cyano-7-deazaguanine synthase (227 aa).

Position 8–18 (8–18 (FSGGQDSTTCL)) interacts with ATP. Residues Cys-187, Cys-196, Cys-199, and Cys-202 each coordinate Zn(2+).

The protein belongs to the QueC family. It depends on Zn(2+) as a cofactor.

It catalyses the reaction 7-carboxy-7-deazaguanine + NH4(+) + ATP = 7-cyano-7-deazaguanine + ADP + phosphate + H2O + H(+). The protein operates within purine metabolism; 7-cyano-7-deazaguanine biosynthesis. Functionally, catalyzes the ATP-dependent conversion of 7-carboxy-7-deazaguanine (CDG) to 7-cyano-7-deazaguanine (preQ(0)). This Shewanella pealeana (strain ATCC 700345 / ANG-SQ1) protein is 7-cyano-7-deazaguanine synthase.